A 648-amino-acid polypeptide reads, in one-letter code: Indolepyruvate oxidoreductase subunit IorA (648 aa).

4Fe-4S ferredoxin-type domains follow at residues 585-614 (PIYQ…WDAE) and 616-645 (KKAR…KVRE). [4Fe-4S] cluster-binding residues include Cys594, Cys597, Cys600, Cys606, Cys625, Cys628, Cys631, and Cys635.

Heterodimer of the IorA and IorB subunits. The cofactor is [4Fe-4S] cluster.

The enzyme catalyses indole-3-pyruvate + 2 oxidized [2Fe-2S]-[ferredoxin] + CoA = (indol-3-yl)acetyl-CoA + 2 reduced [2Fe-2S]-[ferredoxin] + CO2 + H(+). Its function is as follows. Catalyzes the ferredoxin-dependent oxidative decarboxylation of arylpyruvates. The chain is Indolepyruvate oxidoreductase subunit IorA (iorA) from Pyrococcus horikoshii (strain ATCC 700860 / DSM 12428 / JCM 9974 / NBRC 100139 / OT-3).